The chain runs to 163 residues: ADP-ribosylation factor-like protein 2-binding protein (163 aa).

The protein belongs to the ARL2BP family. As to quaternary structure, interacts with GTP bound ARL2 and ARL3; the complex ARL2-ARL2BP as well as ARL2BP alone, binds to SLC25A4/ANT1. Interaction with ARL2 may be required for cilia basal body localization. Interacts with STAT3; interaction is enhanced with ARL2. Found in a complex with ARL2BP, ARL2 and SLC25A6. Found in a complex with ARL2, ARL2BP and SLC25A4. Interacts with STAT2, STAT3 and STAT4.

Its subcellular location is the cytoplasm. The protein localises to the mitochondrion intermembrane space. The protein resides in the cytoskeleton. It is found in the microtubule organizing center. It localises to the centrosome. Its subcellular location is the nucleus. The protein localises to the spindle. The protein resides in the cilium basal body. Its function is as follows. Together with ARL2, plays a role in the nuclear translocation, retention and transcriptional activity of STAT3. May play a role as an effector of ARL2. This Pongo abelii (Sumatran orangutan) protein is ADP-ribosylation factor-like protein 2-binding protein (ARL2BP).